The sequence spans 314 residues: Small ribosomal subunit biogenesis GTPase RsgA (314 aa).

Positions 1–21 are disordered; sequence MKRAPTKQPAKPAARGGERAQ. Residues 85–246 enclose the CP-type G domain; sequence SDQFKSKLFA…LIDSPGFQEF (162 aa). GTP is bound by residues 134–137 and 188–196; these read NKID and GQSGMGKST. Positions 270, 275, 277, and 283 each coordinate Zn(2+).

It belongs to the TRAFAC class YlqF/YawG GTPase family. RsgA subfamily. As to quaternary structure, monomer. Associates with 30S ribosomal subunit, binds 16S rRNA. Zn(2+) serves as cofactor.

It localises to the cytoplasm. Functionally, one of several proteins that assist in the late maturation steps of the functional core of the 30S ribosomal subunit. Helps release RbfA from mature subunits. May play a role in the assembly of ribosomal proteins into the subunit. Circularly permuted GTPase that catalyzes slow GTP hydrolysis, GTPase activity is stimulated by the 30S ribosomal subunit. This Burkholderia mallei (strain ATCC 23344) protein is Small ribosomal subunit biogenesis GTPase RsgA.